The sequence spans 151 residues: Transcription antitermination protein NusB (151 aa).

Belongs to the NusB family.

Functionally, involved in transcription antitermination. Required for transcription of ribosomal RNA (rRNA) genes. Binds specifically to the boxA antiterminator sequence of the ribosomal RNA (rrn) operons. The polypeptide is Transcription antitermination protein NusB (Photobacterium profundum (strain SS9)).